A 280-amino-acid chain; its full sequence is Pantothenate synthetase (280 aa).

Residue methionine 31 to histidine 38 coordinates ATP. Histidine 38 functions as the Proton donor in the catalytic mechanism. Glutamine 62 contacts (R)-pantoate. Glutamine 62 contacts beta-alanine. Glycine 150–aspartate 153 contributes to the ATP binding site. Glutamine 156 contacts (R)-pantoate. Residues valine 179 and methionine 187–arginine 190 contribute to the ATP site.

Belongs to the pantothenate synthetase family. Homodimer.

Its subcellular location is the cytoplasm. It catalyses the reaction (R)-pantoate + beta-alanine + ATP = (R)-pantothenate + AMP + diphosphate + H(+). It participates in cofactor biosynthesis; (R)-pantothenate biosynthesis; (R)-pantothenate from (R)-pantoate and beta-alanine: step 1/1. Catalyzes the condensation of pantoate with beta-alanine in an ATP-dependent reaction via a pantoyl-adenylate intermediate. This is Pantothenate synthetase from Xanthomonas euvesicatoria pv. vesicatoria (strain 85-10) (Xanthomonas campestris pv. vesicatoria).